Reading from the N-terminus, the 81-residue chain is WAP four-disulfide core domain protein 13 (81 aa).

Residues 1–22 form the signal peptide; it reads MRPVSPLQLLLVLSLAPQPVLG. Residues 31–74 enclose the WAP domain; the sequence is YILEPPPCRSEPGACNMFCTQQEECPEPLQCCSAYCGIVCTSNQ. Cystine bridges form between cysteine 38–cysteine 62, cysteine 45–cysteine 66, cysteine 49–cysteine 61, and cysteine 55–cysteine 70.

The protein localises to the secreted. In terms of biological role, putative acid-stable proteinase inhibitor. The polypeptide is WAP four-disulfide core domain protein 13 (Wfdc13) (Mus musculus (Mouse)).